A 176-amino-acid chain; its full sequence is Cytochrome c oxidase subunit 5b-1, mitochondrial (176 aa).

A mitochondrion-targeting transit peptide spans 1–55; that stretch reads MWRRIVSSQLKTLAADVVAASPRRSIAATTRPVGFYLAANRSAISASSFVIPRRF. Residues cysteine 122, cysteine 146, and cysteine 149 each coordinate Zn(2+). Positions 157–176 are disordered; the sequence is VVGPGGPPDGHGDEDDEHHH.

It belongs to the cytochrome c oxidase subunit 5B (TC 3.D.4.11) family.

It is found in the mitochondrion inner membrane. Functionally, this protein is one of the nuclear-coded polypeptide chains of cytochrome c oxidase, the terminal oxidase in mitochondrial electron transport. The protein is Cytochrome c oxidase subunit 5b-1, mitochondrial (COX5B-1) of Arabidopsis thaliana (Mouse-ear cress).